Reading from the N-terminus, the 232-residue chain is Ribose-5-phosphate isomerase A (232 aa).

Substrate-binding positions include Thr28–Thr31, Asp83–Asp86, and Lys96–Gly99. The Proton acceptor role is filled by Glu105. Lys123 contacts substrate.

This sequence belongs to the ribose 5-phosphate isomerase family. As to quaternary structure, homodimer.

It carries out the reaction aldehydo-D-ribose 5-phosphate = D-ribulose 5-phosphate. The protein operates within carbohydrate degradation; pentose phosphate pathway; D-ribose 5-phosphate from D-ribulose 5-phosphate (non-oxidative stage): step 1/1. Its function is as follows. Catalyzes the reversible conversion of ribose-5-phosphate to ribulose 5-phosphate. The protein is Ribose-5-phosphate isomerase A of Rhodopseudomonas palustris (strain ATCC BAA-98 / CGA009).